The chain runs to 189 residues: Peptide deformylase (189 aa).

2 residues coordinate Fe cation: cysteine 93 and histidine 135. Glutamate 136 is a catalytic residue. Residue histidine 139 coordinates Fe cation.

It belongs to the polypeptide deformylase family. Fe(2+) serves as cofactor.

The catalysed reaction is N-terminal N-formyl-L-methionyl-[peptide] + H2O = N-terminal L-methionyl-[peptide] + formate. Removes the formyl group from the N-terminal Met of newly synthesized proteins. Requires at least a dipeptide for an efficient rate of reaction. N-terminal L-methionine is a prerequisite for activity but the enzyme has broad specificity at other positions. This is Peptide deformylase from Karelsulcia muelleri (strain GWSS) (Sulcia muelleri).